The primary structure comprises 425 residues: Glutamyl-tRNA reductase (425 aa).

Residues 49-52, serine 106, 111-113, and glutamine 117 contribute to the substrate site; these read TCNR and EPQ. Cysteine 50 (nucleophile) is an active-site residue. 186 to 191 is an NADP(+) binding site; that stretch reads GAGETI.

It belongs to the glutamyl-tRNA reductase family. In terms of assembly, homodimer.

It catalyses the reaction (S)-4-amino-5-oxopentanoate + tRNA(Glu) + NADP(+) = L-glutamyl-tRNA(Glu) + NADPH + H(+). Its pathway is porphyrin-containing compound metabolism; protoporphyrin-IX biosynthesis; 5-aminolevulinate from L-glutamyl-tRNA(Glu): step 1/2. Its function is as follows. Catalyzes the NADPH-dependent reduction of glutamyl-tRNA(Glu) to glutamate 1-semialdehyde (GSA). The protein is Glutamyl-tRNA reductase of Saccharophagus degradans (strain 2-40 / ATCC 43961 / DSM 17024).